A 640-amino-acid chain; its full sequence is Threonine--tRNA ligase (640 aa).

Residues 1–61 (MPTITLPDGS…ENDASLQIIT (61 aa)) form the TGS domain. A catalytic region spans residues 242 to 533 (DHRKIGKRLG…LIEHYEGAFP (292 aa)). 3 residues coordinate Zn(2+): Cys-333, His-384, and His-510.

The protein belongs to the class-II aminoacyl-tRNA synthetase family. Homodimer. It depends on Zn(2+) as a cofactor.

The protein localises to the cytoplasm. It catalyses the reaction tRNA(Thr) + L-threonine + ATP = L-threonyl-tRNA(Thr) + AMP + diphosphate + H(+). Its function is as follows. Catalyzes the attachment of threonine to tRNA(Thr) in a two-step reaction: L-threonine is first activated by ATP to form Thr-AMP and then transferred to the acceptor end of tRNA(Thr). Also edits incorrectly charged L-seryl-tRNA(Thr). The chain is Threonine--tRNA ligase from Pseudomonas savastanoi pv. phaseolicola (strain 1448A / Race 6) (Pseudomonas syringae pv. phaseolicola (strain 1448A / Race 6)).